We begin with the raw amino-acid sequence, 125 residues long: UPF0225 protein Cgl1438/cg1626 (125 aa).

This sequence belongs to the UPF0225 family.

The protein is UPF0225 protein Cgl1438/cg1626 of Corynebacterium glutamicum (strain ATCC 13032 / DSM 20300 / JCM 1318 / BCRC 11384 / CCUG 27702 / LMG 3730 / NBRC 12168 / NCIMB 10025 / NRRL B-2784 / 534).